Reading from the N-terminus, the 353-residue chain is Holliday junction branch migration complex subunit RuvB (353 aa).

Positions 1 to 25 (MDPGPAGDEVSLAPQQETAEQDVET) are disordered. The interval 1–188 (MDPGPAGDEV…FGFTAHMEFY (188 aa)) is large ATPase domain (RuvB-L). ATP contacts are provided by residues leucine 27, arginine 28, glycine 69, lysine 72, threonine 73, serine 74, 135-137 (EDY), arginine 178, tyrosine 188, and arginine 225. Threonine 73 lines the Mg(2+) pocket. Residues 189–259 (EPAELELVVR…VARAALEVYD (71 aa)) are small ATPAse domain (RuvB-S). Positions 262–353 (EHGLDRLDRA…ATRSLFADEV (92 aa)) are head domain (RuvB-H). Arginine 317 and arginine 322 together coordinate DNA.

The protein belongs to the RuvB family. In terms of assembly, homohexamer. Forms an RuvA(8)-RuvB(12)-Holliday junction (HJ) complex. HJ DNA is sandwiched between 2 RuvA tetramers; dsDNA enters through RuvA and exits via RuvB. An RuvB hexamer assembles on each DNA strand where it exits the tetramer. Each RuvB hexamer is contacted by two RuvA subunits (via domain III) on 2 adjacent RuvB subunits; this complex drives branch migration. In the full resolvosome a probable DNA-RuvA(4)-RuvB(12)-RuvC(2) complex forms which resolves the HJ.

The protein resides in the cytoplasm. The enzyme catalyses ATP + H2O = ADP + phosphate + H(+). The RuvA-RuvB-RuvC complex processes Holliday junction (HJ) DNA during genetic recombination and DNA repair, while the RuvA-RuvB complex plays an important role in the rescue of blocked DNA replication forks via replication fork reversal (RFR). RuvA specifically binds to HJ cruciform DNA, conferring on it an open structure. The RuvB hexamer acts as an ATP-dependent pump, pulling dsDNA into and through the RuvAB complex. RuvB forms 2 homohexamers on either side of HJ DNA bound by 1 or 2 RuvA tetramers; 4 subunits per hexamer contact DNA at a time. Coordinated motions by a converter formed by DNA-disengaged RuvB subunits stimulates ATP hydrolysis and nucleotide exchange. Immobilization of the converter enables RuvB to convert the ATP-contained energy into a lever motion, pulling 2 nucleotides of DNA out of the RuvA tetramer per ATP hydrolyzed, thus driving DNA branch migration. The RuvB motors rotate together with the DNA substrate, which together with the progressing nucleotide cycle form the mechanistic basis for DNA recombination by continuous HJ branch migration. Branch migration allows RuvC to scan DNA until it finds its consensus sequence, where it cleaves and resolves cruciform DNA. This is Holliday junction branch migration complex subunit RuvB from Saccharopolyspora erythraea (strain ATCC 11635 / DSM 40517 / JCM 4748 / NBRC 13426 / NCIMB 8594 / NRRL 2338).